Consider the following 445-residue polypeptide: Tubulin beta chain (445 aa).

GTP contacts are provided by Q11, E69, S138, G142, T143, G144, N205, and N227. Mg(2+) is bound at residue E69.

This sequence belongs to the tubulin family. In terms of assembly, dimer of alpha and beta chains. A typical microtubule is a hollow water-filled tube with an outer diameter of 25 nm and an inner diameter of 15 nM. Alpha-beta heterodimers associate head-to-tail to form protofilaments running lengthwise along the microtubule wall with the beta-tubulin subunit facing the microtubule plus end conferring a structural polarity. Microtubules usually have 13 protofilaments but different protofilament numbers can be found in some organisms and specialized cells. Requires Mg(2+) as cofactor.

The protein localises to the cytoplasm. It is found in the cytoskeleton. In terms of biological role, tubulin is the major constituent of microtubules, a cylinder consisting of laterally associated linear protofilaments composed of alpha- and beta-tubulin heterodimers. Microtubules grow by the addition of GTP-tubulin dimers to the microtubule end, where a stabilizing cap forms. Below the cap, tubulin dimers are in GDP-bound state, owing to GTPase activity of alpha-tubulin. The polypeptide is Tubulin beta chain (TUB2) (Ajellomyces capsulatus (Darling's disease fungus)).